Here is a 157-residue protein sequence, read N- to C-terminus: 2-C-methyl-D-erythritol 2,4-cyclodiphosphate synthase (157 aa).

2 residues coordinate a divalent metal cation: D8 and H10. Residues 8–10 (DVH) and 34–35 (HS) each bind 4-CDP-2-C-methyl-D-erythritol 2-phosphate. Residue H42 coordinates a divalent metal cation. 4-CDP-2-C-methyl-D-erythritol 2-phosphate-binding positions include 56 to 58 (DIG), 132 to 135 (TTNE), and R142.

The protein belongs to the IspF family. As to quaternary structure, homotrimer. A divalent metal cation is required as a cofactor.

It catalyses the reaction 4-CDP-2-C-methyl-D-erythritol 2-phosphate = 2-C-methyl-D-erythritol 2,4-cyclic diphosphate + CMP. The protein operates within isoprenoid biosynthesis; isopentenyl diphosphate biosynthesis via DXP pathway; isopentenyl diphosphate from 1-deoxy-D-xylulose 5-phosphate: step 4/6. In terms of biological role, involved in the biosynthesis of isopentenyl diphosphate (IPP) and dimethylallyl diphosphate (DMAPP), two major building blocks of isoprenoid compounds. Catalyzes the conversion of 4-diphosphocytidyl-2-C-methyl-D-erythritol 2-phosphate (CDP-ME2P) to 2-C-methyl-D-erythritol 2,4-cyclodiphosphate (ME-CPP) with a corresponding release of cytidine 5-monophosphate (CMP). This chain is 2-C-methyl-D-erythritol 2,4-cyclodiphosphate synthase, found in Chlorobaculum tepidum (strain ATCC 49652 / DSM 12025 / NBRC 103806 / TLS) (Chlorobium tepidum).